Reading from the N-terminus, the 828-residue chain is Phenylalanine--tRNA ligase beta subunit (828 aa).

One can recognise a tRNA-binding domain in the interval 44 to 155; that stretch reads GPVDGPLTVG…GTAEPGADGA (112 aa). The B5 domain maps to 411 to 486; that stretch reads WSPPAIQMPA…RLEGLEVIGS (76 aa). 4 residues coordinate Mg(2+): D464, D470, E473, and E474. An FDX-ACB domain is found at 734–827; that stretch reads SPFPAVFQDV…AAEAVGAELR (94 aa).

It belongs to the phenylalanyl-tRNA synthetase beta subunit family. Type 1 subfamily. As to quaternary structure, tetramer of two alpha and two beta subunits. The cofactor is Mg(2+).

It localises to the cytoplasm. It carries out the reaction tRNA(Phe) + L-phenylalanine + ATP = L-phenylalanyl-tRNA(Phe) + AMP + diphosphate + H(+). The chain is Phenylalanine--tRNA ligase beta subunit from Mycolicibacterium paratuberculosis (strain ATCC BAA-968 / K-10) (Mycobacterium paratuberculosis).